We begin with the raw amino-acid sequence, 209 residues long: Protease (209 aa).

Catalysis depends on residues H55, D72, and C123.

It belongs to the peptidase C5 family. As to quaternary structure, interacts with protease cofactor pVI-C; this interaction is necessary for protease activation.

It is found in the virion. The protein resides in the host nucleus. It carries out the reaction Cleaves proteins of the adenovirus and its host cell at two consensus sites: -Yaa-Xaa-Gly-Gly-|-Xaa- and -Yaa-Xaa-Gly-Xaa-|-Gly- (in which Yaa is Met, Ile or Leu, and Xaa is any amino acid).. Its activity is regulated as follows. Requires DNA and protease cofactor for maximal activation. Inside nascent virions, becomes partially activated by binding to the viral DNA, allowing it to cleave the cofactor that binds to the protease and fully activates it. Actin, like the viral protease cofactor, seems to act as a cofactor in the cleavage of cytokeratin 18 and of actin itself. In terms of biological role, cleaves viral precursor proteins (pTP, pIIIa, pVI, pVII, pVIII, and pX) inside newly assembled particles giving rise to mature virions. Protease complexed to its cofactor slides along the viral DNA to specifically locate and cleave the viral precursors. Mature virions have a weakened organization compared to the unmature virions, thereby facilitating subsequent uncoating. Without maturation, the particle lacks infectivity and is unable to uncoat. Late in adenovirus infection, in the cytoplasm, may participate in the cytoskeleton destruction. Cleaves host cell cytoskeletal keratins K7 and K18. In Human adenovirus D serotype 17 (HAdV-17), this protein is Protease.